The following is a 273-amino-acid chain: MHPIQSLIEQAFENRAEITPATVSPELKAAIEQVITELDNGHLRVAEKNGAEWVVNQWVKKAVLLSFRIRDNAVQDDGVNRYFDKVDTKFADWSQARFQEAGFRVVPGAVARKGSFIAKNTVLMPSYVNIGAYVDEGTMVDTWATVGSCAQIGKNVHLSGGVGIGGVLEPLQANPTIIEDNCFIGARSEIVEGVIVGEGSVISMGVYIGQSTKIYDRETGEVMYGRVPPGSVVVSGNLPSKDGSHSLYCAVIVKKVDAQTRSKTSINELLRGV.

The substrate site is built by Arg104 and Asp141.

The protein belongs to the transferase hexapeptide repeat family. As to quaternary structure, homotrimer.

The protein resides in the cytoplasm. The catalysed reaction is (S)-2,3,4,5-tetrahydrodipicolinate + succinyl-CoA + H2O = (S)-2-succinylamino-6-oxoheptanedioate + CoA. Its pathway is amino-acid biosynthesis; L-lysine biosynthesis via DAP pathway; LL-2,6-diaminopimelate from (S)-tetrahydrodipicolinate (succinylase route): step 1/3. This Chromobacterium violaceum (strain ATCC 12472 / DSM 30191 / JCM 1249 / CCUG 213 / NBRC 12614 / NCIMB 9131 / NCTC 9757 / MK) protein is 2,3,4,5-tetrahydropyridine-2,6-dicarboxylate N-succinyltransferase.